The chain runs to 181 residues: Inner membrane-spanning protein YciB (181 aa).

5 consecutive transmembrane segments (helical) span residues leucine 10–isoleucine 30, methionine 50–aspartate 70, serine 72–serine 92, valine 118–phenylalanine 138, and phenylalanine 148–leucine 168.

This sequence belongs to the YciB family.

The protein resides in the cell inner membrane. Plays a role in cell envelope biogenesis, maintenance of cell envelope integrity and membrane homeostasis. This Shewanella pealeana (strain ATCC 700345 / ANG-SQ1) protein is Inner membrane-spanning protein YciB.